The primary structure comprises 226 residues: MEKLTTITATGVPLRRSNVDTDQIIPAVFLKRVTRTGFDDALFYAWRRDPNFVLNQPEYRDGRILVAGPDFGIGSSREHAVWALHDYGFRVVIASRFADIFYGNTAKNGVLAAIMPQESIELIWKMLEEEPGRQMTVDLETRTVTIDDVVLPFEVNDYVRWRLMNGYDDIDLTLQHEDDIAAYERMRAEKFPFKPKTLPAITEEAETVESAREPEAVEWAGPLADR.

The tract at residues 204–226 (EAETVESAREPEAVEWAGPLADR) is disordered.

This sequence belongs to the LeuD family. LeuD type 1 subfamily. As to quaternary structure, heterodimer of LeuC and LeuD.

It catalyses the reaction (2R,3S)-3-isopropylmalate = (2S)-2-isopropylmalate. Its pathway is amino-acid biosynthesis; L-leucine biosynthesis; L-leucine from 3-methyl-2-oxobutanoate: step 2/4. In terms of biological role, catalyzes the isomerization between 2-isopropylmalate and 3-isopropylmalate, via the formation of 2-isopropylmaleate. This is 3-isopropylmalate dehydratase small subunit from Bifidobacterium animalis subsp. lactis (strain AD011).